A 410-amino-acid chain; its full sequence is 2,3-bisphosphoglycerate-independent phosphoglycerate mutase (410 aa).

It belongs to the BPG-independent phosphoglycerate mutase family. A-PGAM subfamily.

It carries out the reaction (2R)-2-phosphoglycerate = (2R)-3-phosphoglycerate. The protein operates within carbohydrate degradation; glycolysis; pyruvate from D-glyceraldehyde 3-phosphate: step 3/5. Catalyzes the interconversion of 2-phosphoglycerate and 3-phosphoglycerate. This chain is 2,3-bisphosphoglycerate-independent phosphoglycerate mutase, found in Pyrococcus abyssi (strain GE5 / Orsay).